The primary structure comprises 407 residues: ATP phosphoribosyltransferase regulatory subunit (407 aa).

This sequence belongs to the class-II aminoacyl-tRNA synthetase family. HisZ subfamily. Heteromultimer composed of HisG and HisZ subunits.

It localises to the cytoplasm. It functions in the pathway amino-acid biosynthesis; L-histidine biosynthesis; L-histidine from 5-phospho-alpha-D-ribose 1-diphosphate: step 1/9. Its function is as follows. Required for the first step of histidine biosynthesis. May allow the feedback regulation of ATP phosphoribosyltransferase activity by histidine. In Rippkaea orientalis (strain PCC 8801 / RF-1) (Cyanothece sp. (strain PCC 8801)), this protein is ATP phosphoribosyltransferase regulatory subunit.